We begin with the raw amino-acid sequence, 193 residues long: dCTP deaminase (193 aa).

Residues 110-115 (RSSLAR), D128, 136-138 (VLE), Y171, K178, and Q182 contribute to the dCTP site. E138 serves as the catalytic Proton donor/acceptor. The disordered stretch occupies residues 171–193 (YHQRQDAKYHNQKGAVASRIDKD).

This sequence belongs to the dCTP deaminase family. As to quaternary structure, homotrimer.

The enzyme catalyses dCTP + H2O + H(+) = dUTP + NH4(+). Its pathway is pyrimidine metabolism; dUMP biosynthesis; dUMP from dCTP (dUTP route): step 1/2. Its function is as follows. Catalyzes the deamination of dCTP to dUTP. The polypeptide is dCTP deaminase (Hamiltonella defensa subsp. Acyrthosiphon pisum (strain 5AT)).